A 476-amino-acid chain; its full sequence is ENTH domain-containing protein C794.11c (476 aa).

The ENTH domain maps to Tyr30–Ile154. Disordered regions lie at residues Glu157–Arg198, Asn213–Asp308, Gln410–Asn429, and Val444–Asp472. A Phosphoserine modification is found at Ser173. Low complexity-rich tracts occupy residues Arg178–Arg198 and Asn213–Ser222. At Ser228 the chain carries Phosphoserine. The span at Asp229 to Asp240 shows a compositional bias: acidic residues. Position 235 is a phosphotyrosine (Tyr235). Phosphoserine is present on residues Ser243 and Ser244. Over residues Gln262–Lys271 the composition is skewed to basic and acidic residues. The span at Val444–Val454 shows a compositional bias: basic and acidic residues. Ser459 carries the phosphoserine modification.

The polypeptide is ENTH domain-containing protein C794.11c (Schizosaccharomyces pombe (strain 972 / ATCC 24843) (Fission yeast)).